We begin with the raw amino-acid sequence, 451 residues long: Tubulin alpha chain (451 aa).

Gln-11 is a binding site for GTP. Lys-40 carries the post-translational modification N6-acetyllysine. GTP-binding residues include Glu-71, Gly-144, Thr-145, Thr-179, Asn-206, and Asn-228. Residue Glu-71 participates in Mg(2+) binding. Glu-254 is a catalytic residue.

Belongs to the tubulin family. In terms of assembly, dimer of alpha and beta chains. A typical microtubule is a hollow water-filled tube with an outer diameter of 25 nm and an inner diameter of 15 nM. Alpha-beta heterodimers associate head-to-tail to form protofilaments running lengthwise along the microtubule wall with the beta-tubulin subunit facing the microtubule plus end conferring a structural polarity. Microtubules usually have 13 protofilaments but different protofilament numbers can be found in some organisms and specialized cells. It depends on Mg(2+) as a cofactor. Undergoes a tyrosination/detyrosination cycle, the cyclic removal and re-addition of a C-terminal tyrosine residue by the enzymes tubulin tyrosine carboxypeptidase (TTCP) and tubulin tyrosine ligase (TTL), respectively. Post-translationally, acetylation of alpha chains at Lys-40 stabilizes microtubules and affects affinity and processivity of microtubule motors. This modification has a role in multiple cellular functions, ranging from cell motility, cell cycle progression or cell differentiation to intracellular trafficking and signaling.

It is found in the cytoplasm. Its subcellular location is the cytoskeleton. The catalysed reaction is GTP + H2O = GDP + phosphate + H(+). Its function is as follows. Tubulin is the major constituent of microtubules, a cylinder consisting of laterally associated linear protofilaments composed of alpha- and beta-tubulin heterodimers. Microtubules grow by the addition of GTP-tubulin dimers to the microtubule end, where a stabilizing cap forms. Below the cap, tubulin dimers are in GDP-bound state, owing to GTPase activity of alpha-tubulin. The sequence is that of Tubulin alpha chain (TUBA) from Euglena gracilis.